We begin with the raw amino-acid sequence, 430 residues long: Glutamate-1-semialdehyde 2,1-aminomutase 2 (430 aa).

Lysine 268 bears the N6-(pyridoxal phosphate)lysine mark.

It belongs to the class-III pyridoxal-phosphate-dependent aminotransferase family. HemL subfamily. As to quaternary structure, homodimer. The cofactor is pyridoxal 5'-phosphate.

The protein localises to the cytoplasm. It carries out the reaction (S)-4-amino-5-oxopentanoate = 5-aminolevulinate. It participates in porphyrin-containing compound metabolism; protoporphyrin-IX biosynthesis; 5-aminolevulinate from L-glutamyl-tRNA(Glu): step 2/2. In Shouchella clausii (strain KSM-K16) (Alkalihalobacillus clausii), this protein is Glutamate-1-semialdehyde 2,1-aminomutase 2.